The chain runs to 241 residues: Glucosamine-6-phosphate deaminase (241 aa).

The Proton acceptor; for enolization step role is filled by aspartate 67. The active-site For ring-opening step is the asparagine 136. Histidine 138 acts as the Proton acceptor; for ring-opening step in catalysis. The active-site For ring-opening step is the glutamate 143.

The protein belongs to the glucosamine/galactosamine-6-phosphate isomerase family. NagB subfamily.

The catalysed reaction is alpha-D-glucosamine 6-phosphate + H2O = beta-D-fructose 6-phosphate + NH4(+). The protein operates within amino-sugar metabolism; N-acetylneuraminate degradation; D-fructose 6-phosphate from N-acetylneuraminate: step 5/5. In terms of biological role, catalyzes the reversible isomerization-deamination of glucosamine 6-phosphate (GlcN6P) to form fructose 6-phosphate (Fru6P) and ammonium ion. The chain is Glucosamine-6-phosphate deaminase from Clostridium novyi (strain NT).